We begin with the raw amino-acid sequence, 338 residues long: Phosphatidylinositol:ceramide inositolphosphotransferase (338 aa).

Over 1–36 the chain is Cytoplasmic; sequence MTSHVTAHDVGGNEDIGTDHVPWYKQPLPLCTQVMR. The helical transmembrane segment at 37–57 threads the bilayer; the sequence is FILLLLLTVMFLGVAILVANA. Residues 58–87 lie on the Extracellular side of the membrane; sequence RMPDPEKVRPLPDLLLESIPKVALLENGTN. A helical membrane pass occupies residues 88 to 108; sequence VIIFLLNATTVVVGFKVFLLE. Residues 109-116 lie on the Cytoplasmic side of the membrane; that stretch reads RHMNGLPR. Residues 117-137 traverse the membrane as a helical segment; that stretch reads VTFLVGVPKIGSFLNRMAFGV. The Extracellular portion of the chain corresponds to 138–152; it reads LDSGRRPFPLKNVFP. The chain crosses the membrane as a helical span at residues 153 to 173; it reads IMAIRFLTSYAVVMVFRAFVI. Residues 174–189 are Cytoplasmic-facing; sequence MGTSYPATDNHCQNPQ. Residues 190 to 210 traverse the membrane as a helical segment; sequence VIEHPVLNVILTLVTLGSGAI. Over 211-222 the chain is Extracellular; it reads HCGDLMFSGHTM. H220 is an active-site residue. The helical transmembrane segment at 223–243 threads the bilayer; it reads ILSLAFILAWDYSPFLHPWAV. Residues 244–338 lie on the Cytoplasmic side of the membrane; it reads RVWVSVLLPI…TDASAALPEH (95 aa). Catalysis depends on residues H264 and D268.

The protein belongs to the sphingomyelin synthase family.

The protein localises to the membrane. Its function is as follows. Bidirectional lipid inositolphosphotransferase capable of converting phosphatidylinositol (PI) and ceramide to inositol-phosphorylceramide (IPC) and diacylglycerol (DAG) and vice versa. Direction is dependent on the relative concentrations of DAG and ceramide as phosphoinositol acceptors. Essential for viability of the pathogenic bloodstream stage of this human protozoan parasite and, consequently, can be considered as potential drug target. The chain is Phosphatidylinositol:ceramide inositolphosphotransferase from Leishmania major.